Reading from the N-terminus, the 223-residue chain is uncharacterized protein (223 aa).

A compositionally biased stretch (basic residues) spans 1 to 11 (MLWVQRKRRRK). Positions 1–37 (MLWVQRKRRRKETSECPSDKDKSPESHKAKNESWIKS) are disordered. Positions 12–37 (ETSECPSDKDKSPESHKAKNESWIKS) are enriched in basic and acidic residues. At Ser43 the chain carries Phosphoserine. Disordered regions lie at residues 49–73 (LDNN…SSTV) and 196–223 (THTF…NRRH). The span at 51–61 (NNASASGNATQ) shows a compositional bias: polar residues. Over residues 62–73 (TESGSEEVSSTV) the composition is skewed to low complexity. Residues 202 to 223 (HSHHSHHGHPSHQSHSLPNRRH) are compositionally biased toward basic residues.

This is an uncharacterized protein from Homo sapiens (Human).